A 455-amino-acid chain; its full sequence is Probable glycine dehydrogenase (decarboxylating) subunit 1 (455 aa).

It belongs to the GcvP family. N-terminal subunit subfamily. As to quaternary structure, the glycine cleavage system is composed of four proteins: P, T, L and H. In this organism, the P 'protein' is a heterodimer of two subunits.

The enzyme catalyses N(6)-[(R)-lipoyl]-L-lysyl-[glycine-cleavage complex H protein] + glycine + H(+) = N(6)-[(R)-S(8)-aminomethyldihydrolipoyl]-L-lysyl-[glycine-cleavage complex H protein] + CO2. The glycine cleavage system catalyzes the degradation of glycine. The P protein binds the alpha-amino group of glycine through its pyridoxal phosphate cofactor; CO(2) is released and the remaining methylamine moiety is then transferred to the lipoamide cofactor of the H protein. This is Probable glycine dehydrogenase (decarboxylating) subunit 1 from Saccharolobus islandicus (strain Y.G.57.14 / Yellowstone #1) (Sulfolobus islandicus).